We begin with the raw amino-acid sequence, 254 residues long: Countin-2 (254 aa).

The first 19 residues, 1–19 (MMIKYITIAILFIASLVKA), serve as a signal peptide directing secretion. The Saposin B-type domain maps to 22–107 (QFSLCPTCVD…EELTVCPKNQ (86 aa)). 3 disulfides stabilise this stretch: Cys26–Cys103, Cys29–Cys97, and Cys56–Cys68. Asn110 and Asn219 each carry an N-linked (GlcNAc...) asparagine glycan. Residues 231–254 (QMTGTGSGSGSGSGSSSGAAYLRY) are disordered. Positions 233 to 245 (TGTGSGSGSGSGS) are enriched in gly residues.

The protein belongs to the countin family.

It localises to the secreted. Cell-counting factor that limits the minimum size of the multicellular structure. May up-regulate the expression of both gp24 and gp80, which mediate cell adhesion. This Dictyostelium discoideum (Social amoeba) protein is Countin-2 (ctnB).